A 713-amino-acid polypeptide reads, in one-letter code: Glutamine-dependent NAD(+) synthetase (713 aa).

Positions 4-275 constitute a CN hydrolase domain; that stretch reads VTLATCNLNQ…IEVITATVDL (272 aa). Glu44 acts as the Proton acceptor; for glutaminase activity in catalysis. Lys114 functions as the For glutaminase activity in the catalytic mechanism. Cys175 functions as the Nucleophile; for glutaminase activity in the catalytic mechanism. A ligase region spans residues 324–703; sequence YNTPAEEIGF…QRPQLKNTVN (380 aa). 354 to 361 lines the ATP pocket; the sequence is PLSGGADS. Residue Ser356 is part of the active site.

The protein in the C-terminal section; belongs to the NAD synthetase family.

It catalyses the reaction deamido-NAD(+) + L-glutamine + ATP + H2O = L-glutamate + AMP + diphosphate + NAD(+) + H(+). It participates in cofactor biosynthesis; NAD(+) biosynthesis; NAD(+) from deamido-NAD(+) (L-Gln route): step 1/1. The sequence is that of Glutamine-dependent NAD(+) synthetase (nadsyn1) from Dictyostelium discoideum (Social amoeba).